Reading from the N-terminus, the 915-residue chain is p53-induced death domain-containing protein 1 (915 aa).

The residue at position 2 (Ala-2) is an N-acetylalanine. 7 LRR repeats span residues 131–152, 154–176, 177–199, 200–221, 223–245, 246–268, and 269–290; these read CLAH…VPEL, GLDA…GALP, ALTF…GSLS, TLQR…IGNL, SLSE…AGLR, SLRL…VHLP, and LITR…LLDA. Position 304 is a phosphoserine (Ser-304). ZU5 domains lie at 327 to 459 and 460 to 601; these read DLDS…VLRP and VSNT…WYTT. Peptidase S68 stretches follow at residues 428–457 and 571–599; these read DLET…LVVL and DITT…WLWY. Active-site residues include His-449, Ser-451, His-591, and Ser-593. A UPA domain region spans residues 585–721; it reads ARFQVTHFSW…TTALDREAQD (137 aa). The Death domain maps to 793 to 878; that stretch reads TQSNLLSVAS…DVAEEVRAIL (86 aa). The segment at 888-915 is disordered; sequence SIRRTGLAPEDSTLPGTSASQTPESAQA. Positions 901 to 915 are enriched in polar residues; that stretch reads LPGTSASQTPESAQA.

Forms a complex named the PIDDosome with CASP2 and CRADD. Forms a complex with IKBKG and RIPK1. Interacts with FADD and MADD. Undergoes autoproteolytic processing whose extent either directs cells towards survival or apoptotic pathways. Autoproteolytically cleaved into two main fragments PIDD-N and PIDD-C. PIDD-C can be further processed into PIDD-CC, a processing which is enhanced by DNA damage. The cleavage producing PIDD-C is required for translocation of PIDD1 to the nucleus upon DNA damage and activation of NF-kappa-B. PIDD-CC mediates the interaction with CRADD and the cleavage producing PIDD-CC is required for the activation of CASP2. PIDD-N remains associated with PIDD-C and PIDD-CC after cleavage. As to expression, ubiquitous.

The protein localises to the cytoplasm. The protein resides in the nucleus. Its function is as follows. Component of the DNA damage/stress response pathway that functions downstream of p53/TP53 and can either promote cell survival or apoptosis. Associated with CRADD and the CASP2 caspase, it forms the PIDDosome a complex that activates CASP2 and triggers apoptosis. Associated with IKBKG and RIPK1, it enhances sumoylation and ubiquitination of IKBKG which is important for activation of the transcription factor NF-kappa-B. The chain is p53-induced death domain-containing protein 1 from Mus musculus (Mouse).